The primary structure comprises 503 residues: ATP synthase subunit alpha (503 aa).

Residue Gly170–Thr177 coordinates ATP.

It belongs to the ATPase alpha/beta chains family. F-type ATPases have 2 components, CF(1) - the catalytic core - and CF(0) - the membrane proton channel. CF(1) has five subunits: alpha(3), beta(3), gamma(1), delta(1), epsilon(1). CF(0) has four main subunits: a, b, b' and c.

It is found in the cellular thylakoid membrane. It catalyses the reaction ATP + H2O + 4 H(+)(in) = ADP + phosphate + 5 H(+)(out). Produces ATP from ADP in the presence of a proton gradient across the membrane. The alpha chain is a regulatory subunit. The chain is ATP synthase subunit alpha from Rippkaea orientalis (strain PCC 8801 / RF-1) (Cyanothece sp. (strain PCC 8801)).